Reading from the N-terminus, the 403-residue chain is Metacaspase-1 (403 aa).

Residues 1-95 are disordered; the sequence is MFPGSGHNTY…PSGSQSFGQN (95 aa). Residues 13–22 show a composition bias toward pro residues; it reads YPPPQGPPPN. Low complexity-rich tracts occupy residues 23–34 and 49–62; these read NNGYNSGPNNSY and QYDQQSQYSQQSQP. Active-site residues include His-193 and Cys-249.

Belongs to the peptidase C14B family.

In terms of biological role, involved in cell death (apoptosis). The chain is Metacaspase-1 (MCA1) from Scheffersomyces stipitis (strain ATCC 58785 / CBS 6054 / NBRC 10063 / NRRL Y-11545) (Yeast).